The primary structure comprises 414 residues: Histidine--tRNA ligase (414 aa).

The protein belongs to the class-II aminoacyl-tRNA synthetase family. In terms of assembly, homodimer.

Its subcellular location is the cytoplasm. It carries out the reaction tRNA(His) + L-histidine + ATP = L-histidyl-tRNA(His) + AMP + diphosphate + H(+). The sequence is that of Histidine--tRNA ligase from Mycoplasma mycoides subsp. mycoides SC (strain CCUG 32753 / NCTC 10114 / PG1).